A 75-amino-acid chain; its full sequence is MSDDMIYKEAIAAEVLQVTGRTGVTGEIFQVRCKILGGKDTGRILTRNIKGPIKVGDIIMLRETEREAKALGRRR.

Belongs to the eukaryotic ribosomal protein eS28 family.

The chain is Small ribosomal subunit protein eS28 from Methanococcus aeolicus (strain ATCC BAA-1280 / DSM 17508 / OCM 812 / Nankai-3).